Consider the following 61-residue polypeptide: Large ribosomal subunit protein bL32 (61 aa).

The segment at 1-44 (MAVQQNRKSRSRRDMRRSHDALTENALTVDQATGETHRRHHVTK) is disordered. Over residues 7–16 (RKSRSRRDMR) the composition is skewed to basic residues. Residues 25-34 (NALTVDQATG) are compositionally biased toward polar residues.

This sequence belongs to the bacterial ribosomal protein bL32 family.

This Acinetobacter baumannii (strain AB307-0294) protein is Large ribosomal subunit protein bL32.